The primary structure comprises 626 residues: 5'-AMP-activated protein kinase catalytic subunit alpha-2 (626 aa).

The span at 1-24 shows a compositional bias: basic and acidic residues; sequence MFSHQDRDRDRKEDGGGDGTEMKS. A disordered region spans residues 1 to 77; the sequence is MFSHQDRDRD…GETSTKQQQE (77 aa). Over residues 38–49 the composition is skewed to basic residues; sequence NLSRKLSAKSRK. Polar residues predominate over residues 58–77; sequence DNSSKMSSPGGETSTKQQQE. Residues 87–339 enclose the Protein kinase domain; the sequence is YILKETLGVG…IKDVIAHEWF (253 aa). Residues 93–101 and Lys-116 each bind ATP; that span reads LGVGTFGKV. The active-site Proton acceptor is Asp-210. Thr-243 bears the Phosphothreonine; by par-4 mark. The segment at 541–568 is disordered; the sequence is SGSASASSSRHASMSMPQKPAGIRGTRT. Positions 542–555 are enriched in low complexity; sequence GSASASSSRHASMS.

Belongs to the protein kinase superfamily. CAMK Ser/Thr protein kinase family. SNF1 subfamily. As to quaternary structure, tetramer, composed of 2 regulatory (R) and 2 catalytic (C) subunits. In the presence of cAMP it dissociates into 2 active monomeric C subunits and an R dimer that binds four cAMP molecules. Post-translationally, phosphorylated on Thr-243 in response to oxidative stress and during dauer development. Phosphorylation at Thr-243 is increased in response to sodium azide or the AMP analog AICAR (5-amino-1-(5-phospho-beta-D-ribosyl)imidazole-4-carboxamide). In terms of tissue distribution, expressed in the pharynx, the ventral cord, neurons including the hermaphrodite-specific neuron, body wall muscles, the vulva, the excretory canal, and weakly in the intestine.

The catalysed reaction is L-seryl-[protein] + ATP = O-phospho-L-seryl-[protein] + ADP + H(+). It catalyses the reaction L-threonyl-[protein] + ATP = O-phospho-L-threonyl-[protein] + ADP + H(+). Its activity is regulated as follows. Activated by phosphorylation. Functionally, acts as a sensor that couples lifespan to information about energy levels and insulin-like signals. Role in motility and response to oxidative stress. Involved in the establishment of germline stem cell (GSC) quiescence during dauer development. Plays a role in axon regrowth after axotomy in PLM neurons. Plays a role in the maintenance of glycogen stores which are necessary for resistance to hyperosmotic stress. Plays a role in the regulation of flp-7 secretion from ASI neurons. Keeps the CREB-regulated transcription coactivator 1 homolog crtc-1 inactive which in turn inhibits flp-7 secretion. Following serotonin signaling, derepresses crtc-1 which stimulates flp-7 secretion and subsequent body fat loss. The chain is 5'-AMP-activated protein kinase catalytic subunit alpha-2 from Caenorhabditis elegans.